A 138-amino-acid polypeptide reads, in one-letter code: Transcription antitermination protein NusB (138 aa).

The protein belongs to the NusB family.

Involved in transcription antitermination. Required for transcription of ribosomal RNA (rRNA) genes. Binds specifically to the boxA antiterminator sequence of the ribosomal RNA (rrn) operons. In Coxiella burnetii (strain Dugway 5J108-111), this protein is Transcription antitermination protein NusB.